A 54-amino-acid chain; its full sequence is Large ribosomal subunit protein uL15 (54 aa).

Basic residues predominate over residues 1-30 (MPSRLRXTRKLRGHVSHGHGRIGKHRKHPG). The interval 1–42 (MPSRLRXTRKLRGHVSHGHGRIGKHRKHPGGRGNAGGMHHHR) is disordered. His-39 carries the (3S)-3-hydroxyhistidine modification. An N6-acetyllysine modification is found at Lys-47.

The protein belongs to the universal ribosomal protein uL15 family. Component of the large ribosomal subunit. Hydroxylated on His-39 by MINA.

It localises to the cytoplasm. Component of the large ribosomal subunit. The ribosome is a large ribonucleoprotein complex responsible for the synthesis of proteins in the cell. This chain is Large ribosomal subunit protein uL15 (RPL27A), found in Sus scrofa (Pig).